A 251-amino-acid polypeptide reads, in one-letter code: tRNA (guanine-N(7)-)-methyltransferase (251 aa).

S-adenosyl-L-methionine contacts are provided by residues G71, 94-95, 128-129, and L148; these read EL and NS. Residue D151 is part of the active site. 226 to 228 provides a ligand contact to S-adenosyl-L-methionine; it reads TEE.

This sequence belongs to the class I-like SAM-binding methyltransferase superfamily. TrmB family.

It is found in the nucleus. It carries out the reaction guanosine(46) in tRNA + S-adenosyl-L-methionine = N(7)-methylguanosine(46) in tRNA + S-adenosyl-L-homocysteine. Its pathway is tRNA modification; N(7)-methylguanine-tRNA biosynthesis. Catalyzes the formation of N(7)-methylguanine at position 46 (m7G46) in tRNA. The polypeptide is tRNA (guanine-N(7)-)-methyltransferase (Arabidopsis thaliana (Mouse-ear cress)).